The sequence spans 79 residues: Keratin-associated protein 21-1 (79 aa).

As to quaternary structure, interacts with hair keratins.

Its function is as follows. In the hair cortex, hair keratin intermediate filaments are embedded in an interfilamentous matrix, consisting of hair keratin-associated proteins (KRTAP), which are essential for the formation of a rigid and resistant hair shaft through their extensive disulfide bond cross-linking with abundant cysteine residues of hair keratins. The matrix proteins include the high-sulfur and high-glycine-tyrosine keratins. This is Keratin-associated protein 21-1 (KRTAP21-1) from Homo sapiens (Human).